Here is a 115-residue protein sequence, read N- to C-terminus: Aspartate 1-decarboxylase (115 aa).

Ser-25 (schiff-base intermediate with substrate; via pyruvic acid) is an active-site residue. Ser-25 bears the Pyruvic acid (Ser) mark. Position 57 (Thr-57) interacts with substrate. Tyr-58 (proton donor) is an active-site residue. 71-73 (GAA) is a substrate binding site.

This sequence belongs to the PanD family. Heterooctamer of four alpha and four beta subunits. Pyruvate is required as a cofactor. Is synthesized initially as an inactive proenzyme, which is activated by self-cleavage at a specific serine bond to produce a beta-subunit with a hydroxyl group at its C-terminus and an alpha-subunit with a pyruvoyl group at its N-terminus.

It localises to the cytoplasm. The catalysed reaction is L-aspartate + H(+) = beta-alanine + CO2. It participates in cofactor biosynthesis; (R)-pantothenate biosynthesis; beta-alanine from L-aspartate: step 1/1. Its function is as follows. Catalyzes the pyruvoyl-dependent decarboxylation of aspartate to produce beta-alanine. In Campylobacter curvus (strain 525.92), this protein is Aspartate 1-decarboxylase.